We begin with the raw amino-acid sequence, 288 residues long: HTH-type transcriptional regulator CzcR (288 aa).

Positions M1 to T58 constitute an HTH lysR-type domain. A DNA-binding region (H-T-H motif) is located at residues V18–K37.

Belongs to the LysR transcriptional regulatory family.

This Bacillus thuringiensis subsp. konkukian (strain 97-27) protein is HTH-type transcriptional regulator CzcR (czcR).